The primary structure comprises 172 residues: Large ribosomal subunit protein uL10 (172 aa).

It belongs to the universal ribosomal protein uL10 family. Part of the ribosomal stalk of the 50S ribosomal subunit. The N-terminus interacts with L11 and the large rRNA to form the base of the stalk. The C-terminus forms an elongated spine to which L12 dimers bind in a sequential fashion forming a multimeric L10(L12)X complex.

Its function is as follows. Forms part of the ribosomal stalk, playing a central role in the interaction of the ribosome with GTP-bound translation factors. The chain is Large ribosomal subunit protein uL10 from Brucella suis (strain ATCC 23445 / NCTC 10510).